The chain runs to 150 residues: Leukotriene C4 synthase (150 aa).

The Cytoplasmic portion of the chain corresponds to 1-6 (MKDEVA). A helical membrane pass occupies residues 7 to 27 (LLATVTLLGVLLQAYFSLQVI). Over 28–48 (RARRAHRVSPPLTTGPPEFER) the chain is Lumenal. R30 serves as a coordination point for glutathione. Catalysis depends on R31, which acts as the Proton donor. Phosphoserine is present on S36. Residues 49-69 (VYRAQVNCSEYFPLFLATLWV) form a helical membrane-spanning segment. Residues 51-55 (RAQVN) and 58-59 (EY) contribute to the glutathione site. Residues 70 to 73 (AGVY) lie on the Cytoplasmic side of the membrane. The chain crosses the membrane as a helical span at residues 74–94 (FHEGAAALCGLVYLFTRLRYF). Residue 93-97 (YFWGY) coordinates glutathione. The Lumenal portion of the chain corresponds to 95-104 (WGYARSAQLR). The Proton acceptor role is filled by R104. A helical transmembrane segment spans residues 105–124 (LAPLYASARALWLLLALATL). Residues 125-150 (GLLAHFLPAAARAALLRLLRALLRTA) are Cytoplasmic-facing.

This sequence belongs to the MAPEG family. Homotrimer. Interacts with ALOX5AP and ALOX5. Post-translationally, phosphorylation at Ser-36 by RPS6KB1 inhibits the leukotriene-C4 synthase activity.

It localises to the nucleus outer membrane. It is found in the endoplasmic reticulum membrane. The protein localises to the nucleus membrane. It carries out the reaction leukotriene C4 = leukotriene A4 + glutathione. The catalysed reaction is (13S,14S)-epoxy-(4Z,7Z,9E,11E,16Z,19Z)-docosahexaenoate + glutathione = (13R)-S-glutathionyl-(14S)-hydroxy-(4Z,7Z,9E,11E,16Z,19Z)-docosahexaenoate. Its pathway is lipid metabolism; leukotriene C4 biosynthesis. With respect to regulation, inhibited by MK886. Its function is as follows. Catalyzes the conjugation of leukotriene A4 with reduced glutathione (GSH) to form leukotriene C4 with high specificity. Can also catalyze the transfer of a glutathionyl group from glutathione (GSH) to 13(S),14(S)-epoxy-docosahexaenoic acid to form maresin conjugate in tissue regeneration 1 (MCTR1), a bioactive lipid mediator that possess potent anti-inflammatory and proresolving actions. In Cavia porcellus (Guinea pig), this protein is Leukotriene C4 synthase (LTC4S).